The sequence spans 302 residues: MTVCAKKHVHLTRDAAEQLLADIDRRLDQLLPVEGERDVVGAAMREGALAPGKRIRPMLLLLTARDLGCAVSHDGLLDLACAVEMVHAASLILDDMPCMDDAKLRRGRPTIHSHYGEHVAILAAVALLSKAFGVIADADGLTPLAKNRAVSELSNAIGMQGLVQGQFKDLSEGDKPRSAEAILMTNHFKTSTLFCASMQMASIVANASSEARDCLHRFSLDLGQAFQLLDDLTDGMTDTGKDSNQDAGKSTLVNLLGPRAVEERLRQHLQLASEHLSAACQHGHATQHFIQAWFDKKLAAVS.

Positions 53, 56, and 87 each coordinate isopentenyl diphosphate. Mg(2+) is bound by residues D94 and D100. A (2E,6E)-farnesyl diphosphate-binding site is contributed by R105. R106 provides a ligand contact to isopentenyl diphosphate. (2E,6E)-farnesyl diphosphate is bound by residues K189, T190, and Q227.

Belongs to the FPP/GGPP synthase family. Mg(2+) is required as a cofactor.

The enzyme catalyses isopentenyl diphosphate + (2E,6E)-farnesyl diphosphate = (2E,6E,10E)-geranylgeranyl diphosphate + diphosphate. It functions in the pathway isoprenoid biosynthesis; geranylgeranyl diphosphate biosynthesis; geranylgeranyl diphosphate from farnesyl diphosphate and isopentenyl diphosphate: step 1/1. Functionally, catalyzes the condensation of farnesyl diphosphate (FPP) and isopentenyl diphosphate (IPP) to yield geranylgeranyl diphosphate (GGPP) needed for biosynthesis of carotenoids and diterpenes. This chain is Geranylgeranyl diphosphate synthase (crtE), found in Pantoea ananas (Erwinia uredovora).